A 244-amino-acid polypeptide reads, in one-letter code: ATP synthase subunit b 2 (244 aa).

The helical transmembrane segment at Thr-2 to Leu-22 threads the bilayer.

This sequence belongs to the ATPase B chain family. As to quaternary structure, F-type ATPases have 2 components, F(1) - the catalytic core - and F(0) - the membrane proton channel. F(1) has five subunits: alpha(3), beta(3), gamma(1), delta(1), epsilon(1). F(0) has three main subunits: a(1), b(2) and c(10-14). The alpha and beta chains form an alternating ring which encloses part of the gamma chain. F(1) is attached to F(0) by a central stalk formed by the gamma and epsilon chains, while a peripheral stalk is formed by the delta and b chains.

Its subcellular location is the cell inner membrane. Its function is as follows. F(1)F(0) ATP synthase produces ATP from ADP in the presence of a proton or sodium gradient. F-type ATPases consist of two structural domains, F(1) containing the extramembraneous catalytic core and F(0) containing the membrane proton channel, linked together by a central stalk and a peripheral stalk. During catalysis, ATP synthesis in the catalytic domain of F(1) is coupled via a rotary mechanism of the central stalk subunits to proton translocation. Component of the F(0) channel, it forms part of the peripheral stalk, linking F(1) to F(0). The protein is ATP synthase subunit b 2 of Gluconobacter oxydans (strain 621H) (Gluconobacter suboxydans).